A 337-amino-acid chain; its full sequence is MAVEMFYDDDADLSIIQGRKVAVIGYGSQGHAHSLSLRDSGVDVRIGLKEGSKSRAKAEEQGLTVGTPAEVSEWADVIMVLAPDTAQASIFTNDIEPNLKDGDALFFGHGLNIHFELIKAPEFVTVGMVAPKGPGHLVRRQFVDGKGVPALIAIDQDPKGEGQALALSYAKAIGGARAGVIKTTFKEETETDLFGEQAVLCGGTEELVKTGFEVMVEAGYAPEMAYFEVLHELKLIVDLMYEGGIARMNYSVSDTAEFGGYLSGPRVIDAGTKERMKAILADIQSGEFTRRLVANVENGNTELEGLRKANAEHPIEVTGKKLRDLMSWVDRPITETA.

One can recognise a KARI N-terminal Rossmann domain in the interval 3–183 (VEMFYDDDAD…GGARAGVIKT (181 aa)). Residues 26–29 (YGSQ), lysine 49, serine 52, serine 54, and 84–87 (DTAQ) contribute to the NADP(+) site. Histidine 109 is an active-site residue. NADP(+) is bound at residue glycine 135. The 146-residue stretch at 184–329 (TFKEETETDL…KKLRDLMSWV (146 aa)) folds into the KARI C-terminal knotted domain. Residues aspartate 192, glutamate 196, glutamate 228, and glutamate 232 each coordinate Mg(2+). Serine 253 contributes to the substrate binding site.

It belongs to the ketol-acid reductoisomerase family. Mg(2+) serves as cofactor.

The enzyme catalyses (2R)-2,3-dihydroxy-3-methylbutanoate + NADP(+) = (2S)-2-acetolactate + NADPH + H(+). It catalyses the reaction (2R,3R)-2,3-dihydroxy-3-methylpentanoate + NADP(+) = (S)-2-ethyl-2-hydroxy-3-oxobutanoate + NADPH + H(+). The protein operates within amino-acid biosynthesis; L-isoleucine biosynthesis; L-isoleucine from 2-oxobutanoate: step 2/4. Its pathway is amino-acid biosynthesis; L-valine biosynthesis; L-valine from pyruvate: step 2/4. Involved in the biosynthesis of branched-chain amino acids (BCAA). Catalyzes an alkyl-migration followed by a ketol-acid reduction of (S)-2-acetolactate (S2AL) to yield (R)-2,3-dihydroxy-isovalerate. In the isomerase reaction, S2AL is rearranged via a Mg-dependent methyl migration to produce 3-hydroxy-3-methyl-2-ketobutyrate (HMKB). In the reductase reaction, this 2-ketoacid undergoes a metal-dependent reduction by NADPH to yield (R)-2,3-dihydroxy-isovalerate. In Rhodococcus opacus (strain B4), this protein is Ketol-acid reductoisomerase (NADP(+)).